Here is a 1773-residue protein sequence, read N- to C-terminus: Mucin-22 (1773 aa).

Residues 1 to 26 form the signal peptide; that stretch reads MRRGNISPAFWFLWLLLFGLLGPSSE. The Extracellular segment spans residues 27 to 1660; it reads NTTAFTKGSD…VIKPSGYLQP (1634 aa). Disordered stretches follow at residues 61 to 102, 176 to 357, 372 to 405, 434 to 572, 590 to 674, 754 to 1026, 1064 to 1485, and 1603 to 1639; these read TGSK…TDSG, TMAS…SETT, MGSE…VGSE, SETI…STAS, TVGS…EGSE, DTTT…ETTM, TTIA…GSET, and MGAS…SMGT. Residues 153 to 1514 form a 124 X 10 AA approximate repeats region; it reads MASSTTSTAG…PTATSLTGSE (1362 aa). The segment covering 178–243 has biased composition (low complexity); that stretch reads ASTTGSETAT…GSEATTTSTA (66 aa). Residues 248 to 258 are compositionally biased toward polar residues; that stretch reads ITASSMSSETT. Residues 262–357 show a composition bias toward low complexity; that stretch reads AAGSNTTTAS…TVSTAGSETT (96 aa). Composition is skewed to low complexity over residues 440-481 and 490-546; these read STAG…AAST and STAG…SEPT. Residues 547–572 are compositionally biased toward polar residues; that stretch reads MASTMGSETTMASTIGPETTKVSTAS. Low complexity-rich tracts occupy residues 755-1025 and 1064-1465; these read TTTA…SETT and TTIA…GSET. 2 stretches are compositionally biased toward polar residues: residues 1466–1485 and 1615–1639; these read NTAC…GSET and RTTT…SMGT. A helical transmembrane segment spans residues 1661 to 1681; the sequence is WAIILISLAAVVAAVGLSVGL. The Cytoplasmic portion of the chain corresponds to 1682–1773; it reads SFCLRNLFFP…GGHYGHGGGH (92 aa).

In terms of tissue distribution, expressed in lung by serous cells of the submucosal gland (at protein level). Detected in the placenta, lung and testis.

The protein localises to the membrane. This chain is Mucin-22 (MUC22), found in Homo sapiens (Human).